The sequence spans 188 residues: dTTP/UTP pyrophosphatase (188 aa).

The active-site Proton acceptor is Asp70.

The protein belongs to the Maf family. YhdE subfamily. The cofactor is a divalent metal cation.

The protein resides in the cytoplasm. It carries out the reaction dTTP + H2O = dTMP + diphosphate + H(+). The enzyme catalyses UTP + H2O = UMP + diphosphate + H(+). Its function is as follows. Nucleoside triphosphate pyrophosphatase that hydrolyzes dTTP and UTP. May have a dual role in cell division arrest and in preventing the incorporation of modified nucleotides into cellular nucleic acids. This Clostridium botulinum (strain Alaska E43 / Type E3) protein is dTTP/UTP pyrophosphatase.